The primary structure comprises 429 residues: Adenylosuccinate synthetase (429 aa).

Residues 12-18 and 40-42 each bind GTP; these read GDEGKGK and GHT. Asp-13 functions as the Proton acceptor in the catalytic mechanism. Positions 13 and 40 each coordinate Mg(2+). IMP is bound by residues 13-16, 38-41, Thr-128, Arg-142, Gln-223, Thr-238, and Arg-302; these read DEGK and NAGH. The Proton donor role is filled by His-41. 298-304 is a substrate binding site; the sequence is TVTGRPR. Residues Arg-304, 330–332, and 412–414 contribute to the GTP site; these read LLD and SVG.

Belongs to the adenylosuccinate synthetase family. As to quaternary structure, homodimer. Mg(2+) serves as cofactor.

It localises to the cytoplasm. It catalyses the reaction IMP + L-aspartate + GTP = N(6)-(1,2-dicarboxyethyl)-AMP + GDP + phosphate + 2 H(+). The protein operates within purine metabolism; AMP biosynthesis via de novo pathway; AMP from IMP: step 1/2. Its function is as follows. Plays an important role in the de novo pathway of purine nucleotide biosynthesis. Catalyzes the first committed step in the biosynthesis of AMP from IMP. The sequence is that of Adenylosuccinate synthetase from Limosilactobacillus fermentum (strain NBRC 3956 / LMG 18251) (Lactobacillus fermentum).